The primary structure comprises 86 residues: Translation initiation factor IF-1 2 (86 aa).

Positions 1–72 constitute an S1-like domain; sequence MAKEELLEME…TKARISFRHK (72 aa).

This sequence belongs to the IF-1 family. In terms of assembly, component of the 30S ribosomal translation pre-initiation complex which assembles on the 30S ribosome in the order IF-2 and IF-3, IF-1 and N-formylmethionyl-tRNA(fMet); mRNA recruitment can occur at any time during PIC assembly.

It is found in the cytoplasm. In terms of biological role, one of the essential components for the initiation of protein synthesis. Stabilizes the binding of IF-2 and IF-3 on the 30S subunit to which N-formylmethionyl-tRNA(fMet) subsequently binds. Helps modulate mRNA selection, yielding the 30S pre-initiation complex (PIC). Upon addition of the 50S ribosomal subunit IF-1, IF-2 and IF-3 are released leaving the mature 70S translation initiation complex. In Aromatoleum aromaticum (strain DSM 19018 / LMG 30748 / EbN1) (Azoarcus sp. (strain EbN1)), this protein is Translation initiation factor IF-1 2.